The chain runs to 407 residues: BTB/POZ and MATH domain-containing protein 1 (407 aa).

Residues asparagine 33–valine 167 form the MATH domain. A BTB domain is found at cysteine 203 to glutamine 270.

The protein belongs to the Tdpoz family. Homodimer or heterodimer with BPM3, BPM5 and BPM6. Interacts with CUL3A and CUL3B. Interacts with RAP2-4 and RAP2-13. Binds to MYB56 at the promoter of FLOWERING LOCUS T (FT). As to expression, ubiquitous.

It localises to the nucleus. It participates in protein modification; protein ubiquitination. Its function is as follows. May act as a substrate-specific adapter of an E3 ubiquitin-protein ligase complex (CUL3-RBX1-BTB) which mediates the ubiquitination and subsequent proteasomal degradation of target proteins. The polypeptide is BTB/POZ and MATH domain-containing protein 1 (BPM1) (Arabidopsis thaliana (Mouse-ear cress)).